We begin with the raw amino-acid sequence, 124 residues long: Fluoride-specific ion channel FluC 2 (124 aa).

4 consecutive transmembrane segments (helical) span residues 9-29 (LGIF…STWL), 34-54 (DFPW…IYLV), 67-87 (LILA…SLML), and 99-119 (LSLI…AYYL). Positions 77 and 80 each coordinate Na(+).

The protein belongs to the fluoride channel Fluc/FEX (TC 1.A.43) family.

Its subcellular location is the cell membrane. It catalyses the reaction fluoride(in) = fluoride(out). With respect to regulation, na(+) is not transported, but it plays an essential structural role and its presence is essential for fluoride channel function. Its function is as follows. Fluoride-specific ion channel. Important for reducing fluoride concentration in the cell, thus reducing its toxicity. The protein is Fluoride-specific ion channel FluC 2 of Streptococcus pneumoniae serotype 4 (strain ATCC BAA-334 / TIGR4).